The primary structure comprises 713 residues: Phosphoribosylformylglycinamidine synthase subunit PurL (713 aa).

H32 is a catalytic residue. Y35 contacts ATP. E76 contributes to the Mg(2+) binding site. Substrate is bound by residues 77–80 (SHNH) and R99. The active-site Proton acceptor is the H78. D100 is a Mg(2+) binding site. Q224 is a substrate binding site. D252 is a Mg(2+) binding site. 296–298 (ESQ) is a binding site for substrate. 2 residues coordinate ATP: D471 and G508. N509 is a binding site for Mg(2+). Substrate is bound at residue S511.

The protein belongs to the FGAMS family. In terms of assembly, monomer. Part of the FGAM synthase complex composed of 1 PurL, 1 PurQ and 2 PurS subunits.

It localises to the cytoplasm. It carries out the reaction N(2)-formyl-N(1)-(5-phospho-beta-D-ribosyl)glycinamide + L-glutamine + ATP + H2O = 2-formamido-N(1)-(5-O-phospho-beta-D-ribosyl)acetamidine + L-glutamate + ADP + phosphate + H(+). The protein operates within purine metabolism; IMP biosynthesis via de novo pathway; 5-amino-1-(5-phospho-D-ribosyl)imidazole from N(2)-formyl-N(1)-(5-phospho-D-ribosyl)glycinamide: step 1/2. Part of the phosphoribosylformylglycinamidine synthase complex involved in the purines biosynthetic pathway. Catalyzes the ATP-dependent conversion of formylglycinamide ribonucleotide (FGAR) and glutamine to yield formylglycinamidine ribonucleotide (FGAM) and glutamate. The FGAM synthase complex is composed of three subunits. PurQ produces an ammonia molecule by converting glutamine to glutamate. PurL transfers the ammonia molecule to FGAR to form FGAM in an ATP-dependent manner. PurS interacts with PurQ and PurL and is thought to assist in the transfer of the ammonia molecule from PurQ to PurL. The chain is Phosphoribosylformylglycinamidine synthase subunit PurL from Thermococcus sibiricus (strain DSM 12597 / MM 739).